A 31-amino-acid chain; its full sequence is Protein YmiC (31 aa).

Residues 9–29 traverse the membrane as a helical segment; the sequence is WSWMGAFSLSMLFWAELLWII.

Its subcellular location is the cell inner membrane. In Escherichia coli (strain K12), this protein is Protein YmiC.